Consider the following 68-residue polypeptide: Neuronal regeneration-related protein (68 aa).

The segment at 21–54 (MEGRLPKGRLPVPKEVNRKKNDETNAASLTPLGS) is disordered. The segment covering 44 to 54 (TNAASLTPLGS) has biased composition (polar residues).

Interacts with the latency-associated peptides (LAP) of TGFB1 and TGFB2; the interaction results in a decrease in TGFB autoinduction. Interacts with FLNA. Post-translationally, phosphorylated on Ser-59. Phosphorylation decreases stability and activity.

It localises to the cytoplasm. Its function is as follows. May have roles in neural function and cellular differentiation. Ectopic expression promotes axonal regeneration, induces differentiation of fibroblast into myofibroblast, induces myofibroblast ameboid migration, augments motility of gliomas, and increases retinoic-acid regulation of lipid-droplet biogenesis. Down-regulates the expression of TGFB1 and TGFB2 but not of TGFB3. May play a role in the regulation of alveolar generation. This Pongo abelii (Sumatran orangutan) protein is Neuronal regeneration-related protein (NREP).